The primary structure comprises 152 residues: Lipoprotein signal peptidase (152 aa).

3 helical membrane passes run 33–53, 58–78, and 83–102; these read VVPPAFYLTYIMNPGAAFGLL, MLFVTVTVIIIAGVLVGYFKI, and PVLDYGLGLVAGGALGNLAD. Catalysis depends on residues Asp111 and Asp125. The chain crosses the membrane as a helical span at residues 120–140; it reads VFNLADTAIVTGAFLLAWALL.

Belongs to the peptidase A8 family.

The protein localises to the cell membrane. It catalyses the reaction Release of signal peptides from bacterial membrane prolipoproteins. Hydrolyzes -Xaa-Yaa-Zaa-|-(S,diacylglyceryl)Cys-, in which Xaa is hydrophobic (preferably Leu), and Yaa (Ala or Ser) and Zaa (Gly or Ala) have small, neutral side chains.. Its pathway is protein modification; lipoprotein biosynthesis (signal peptide cleavage). Its function is as follows. This protein specifically catalyzes the removal of signal peptides from prolipoproteins. In Pelotomaculum thermopropionicum (strain DSM 13744 / JCM 10971 / SI), this protein is Lipoprotein signal peptidase.